A 196-amino-acid chain; its full sequence is RNA pyrophosphohydrolase (196 aa).

A Nudix hydrolase domain is found at 6–149 (GYRPNVGIVI…KRDVYRKVMK (144 aa)). Positions 38–59 (GGINDNESAEQAMYRELHEEVG) match the Nudix box motif.

The protein belongs to the Nudix hydrolase family. RppH subfamily. The cofactor is a divalent metal cation.

Its function is as follows. Accelerates the degradation of transcripts by removing pyrophosphate from the 5'-end of triphosphorylated RNA, leading to a more labile monophosphorylated state that can stimulate subsequent ribonuclease cleavage. The polypeptide is RNA pyrophosphohydrolase (Haemophilus influenzae (strain PittEE)).